Reading from the N-terminus, the 625-residue chain is Folylpolyglutamate synthase (625 aa).

141–144 (GKGS) lines the ATP pocket. S165, E234, and H262 together coordinate Mg(2+). 2 residues coordinate ATP: R384 and D414.

This sequence belongs to the folylpolyglutamate synthase family. A monovalent cation serves as cofactor.

The protein resides in the mitochondrion inner membrane. It is found in the mitochondrion matrix. It carries out the reaction (6S)-5,6,7,8-tetrahydrofolyl-(gamma-L-Glu)(n) + L-glutamate + ATP = (6S)-5,6,7,8-tetrahydrofolyl-(gamma-L-Glu)(n+1) + ADP + phosphate + H(+). It functions in the pathway cofactor biosynthesis; tetrahydrofolylpolyglutamate biosynthesis. Functionally, catalyzes conversion of folates to polyglutamate derivatives allowing concentration of folate compounds in the cell and the intracellular retention of these cofactors, which are important substrates for most of the folate-dependent enzymes that are involved in one-carbon transfer reactions involved in purine, pyrimidine and amino acid synthesis. Essential for organellar and whole-plant folate homeostasis. The protein is Folylpolyglutamate synthase of Arabidopsis thaliana (Mouse-ear cress).